We begin with the raw amino-acid sequence, 338 residues long: MEYFMVPTQKVPSLQHFRKTEKEVIGGLCSLANIPLTPETQRDQERRIRREIANSNERRRMQSINAGFQSLKTLIPHTDGEKLSKAAILQQTAEYIFSLEQEKTRLLQQNTQLKRFIQELSGSSPKRRRAEDKDEGIGSPDIWEDEKAEDLRREMIELRQQLDKERSVRMMLEEQVRSLEAHMYPEKLKVIAQQVQLQQQQEQVRLLHQEKLEREQQQLRTQLLPPPAPTHHPTVIVPAPPPPPSHHINVVTMGPSSVINSVSTSRQNLDTIVQAIQHIEGTQEKQELEEEQRRAVIVKPVRSCPEAPTSDTASDSEASDSDAMDQSREEPSGDGELP.

The 52-residue stretch at 48-99 (IRREIANSNERRRMQSINAGFQSLKTLIPHTDGEKLSKAAILQQTAEYIFSL) folds into the bHLH domain. The leucine-zipper 1 stretch occupies residues 100 to 120 (EQEKTRLLQQNTQLKRFIQEL). Residues 118 to 141 (QELSGSSPKRRRAEDKDEGIGSPD) form a disordered region. A phosphoserine mark is found at Ser-123, Ser-124, and Ser-139. Lys-147 is covalently cross-linked (Glycyl lysine isopeptide (Lys-Gly) (interchain with G-Cter in SUMO2)). Residues 151–179 (LRREMIELRQQLDKERSVRMMLEEQVRSL) are leucine-zipper 2. Residues Lys-187, Lys-189, and Lys-285 each participate in a glycyl lysine isopeptide (Lys-Gly) (interchain with G-Cter in SUMO2) cross-link. A compositionally biased stretch (basic and acidic residues) spans 283-294 (QEKQELEEEQRR). The tract at residues 283–338 (QEKQELEEEQRRAVIVKPVRSCPEAPTSDTASDSEASDSDAMDQSREEPSGDGELP) is disordered.

Efficient DNA binding requires dimerization with another bHLH protein. Homodimer.

Its subcellular location is the nucleus. In terms of biological role, transcription factor that activates both viral and cellular genes by binding to the symmetrical DNA sequence 5'-CAGCTG-3'. The sequence is that of Transcription factor AP-4 (TFAP4) from Homo sapiens (Human).